Here is a 61-residue protein sequence, read N- to C-terminus: Large ribosomal subunit protein uL30 (61 aa).

This sequence belongs to the universal ribosomal protein uL30 family. As to quaternary structure, part of the 50S ribosomal subunit.

In Exiguobacterium sp. (strain ATCC BAA-1283 / AT1b), this protein is Large ribosomal subunit protein uL30.